A 267-amino-acid chain; its full sequence is RWD domain-containing protein 3 (267 aa).

The RWD domain occupies 7–114; that stretch reads QELSALAAIF…LWIQQNLRLV (108 aa). Interaction with UBE2I/UBC9 stretches follow at residues 13-15 and 100-102; these read AAI and VHE.

As to quaternary structure, interacts with UBE2I/UBC9, NFKBIA, HIF1A and NCOA2.

The protein resides in the nucleus. Its subcellular location is the cytoplasm. Enhancer of SUMO conjugation. Via its interaction with UBE2I/UBC9, increases SUMO conjugation to proteins by promoting the binding of E1 and E2 enzymes, thioester linkage between SUMO and UBE2I/UBC9 and transfer of SUMO to specific target proteins which include HIF1A, PIAS, NFKBIA, NR3C1 and TOP1. Positively regulates the NF-kappa-B signaling pathway by enhancing the sumoylation of NF-kappa-B inhibitor alpha (NFKBIA), promoting its stabilization which consequently leads to an increased inhibition of NF-kappa-B transcriptional activity. Negatively regulates the hypoxia-inducible factor-1 alpha (HIF1A) signaling pathway by increasing the sumoylation of HIF1A, promoting its stabilization, transcriptional activity and the expression of its target gene VEGFA during hypoxia. Has no effect on ubiquitination. The sequence is that of RWD domain-containing protein 3 (Rwdd3) from Mus musculus (Mouse).